Reading from the N-terminus, the 189-residue chain is Elongation factor P (189 aa).

Belongs to the elongation factor P family.

The protein resides in the cytoplasm. Its pathway is protein biosynthesis; polypeptide chain elongation. Involved in peptide bond synthesis. Stimulates efficient translation and peptide-bond synthesis on native or reconstituted 70S ribosomes in vitro. Probably functions indirectly by altering the affinity of the ribosome for aminoacyl-tRNA, thus increasing their reactivity as acceptors for peptidyl transferase. The polypeptide is Elongation factor P (Rhizobium leguminosarum bv. trifolii (strain WSM2304)).